The following is a 112-amino-acid chain: Cortistatin (112 aa).

Positions 1–27 are cleaved as a signal peptide; it reads MGGCSTRGKRPSALSLLLLLLLSGIAA. Residues 28–81 constitute a propeptide that is removed on maturation; the sequence is SALPLESGPTGQDSVQDATGGRRTGLLTFLAWWHEWASQDSSSTAFEGGTPELS. The interval 66–101 is disordered; that stretch reads QDSSSTAFEGGTPELSKRQERPPLQQPPHRDKKPCK. Cys100 and Cys111 are oxidised to a cystine.

Belongs to the somatostatin family. Interneurons in the cerebral cortex and hippocampus.

It localises to the secreted. Its function is as follows. Neuropeptide with neuronal depressant and sleep-modulating properties. In Rattus norvegicus (Rat), this protein is Cortistatin (Cort).